The chain runs to 145 residues: Protein BUD31 homolog 3 (145 aa).

Belongs to the BUD31 (G10) family.

The protein resides in the nucleus. This Oryza sativa subsp. japonica (Rice) protein is Protein BUD31 homolog 3.